The chain runs to 383 residues: Succinyl-diaminopimelate desuccinylase (383 aa).

A Zn(2+)-binding site is contributed by H73. Residue D75 is part of the active site. Residue D107 participates in Zn(2+) binding. E141 (proton acceptor) is an active-site residue. Residues E142, E170, and H356 each contribute to the Zn(2+) site.

The protein belongs to the peptidase M20A family. DapE subfamily. In terms of assembly, homodimer. The cofactor is Zn(2+). It depends on Co(2+) as a cofactor.

It carries out the reaction N-succinyl-(2S,6S)-2,6-diaminopimelate + H2O = (2S,6S)-2,6-diaminopimelate + succinate. The protein operates within amino-acid biosynthesis; L-lysine biosynthesis via DAP pathway; LL-2,6-diaminopimelate from (S)-tetrahydrodipicolinate (succinylase route): step 3/3. Catalyzes the hydrolysis of N-succinyl-L,L-diaminopimelic acid (SDAP), forming succinate and LL-2,6-diaminopimelate (DAP), an intermediate involved in the bacterial biosynthesis of lysine and meso-diaminopimelic acid, an essential component of bacterial cell walls. In Pseudomonas paraeruginosa (strain DSM 24068 / PA7) (Pseudomonas aeruginosa (strain PA7)), this protein is Succinyl-diaminopimelate desuccinylase.